Reading from the N-terminus, the 396-residue chain is Probable sugar efflux transporter (396 aa).

The next 12 membrane-spanning stretches (helical) occupy residues 15–35, 50–70, 81–101, 103–123, 136–156, 169–189, 209–229, 246–266, 275–295, 301–321, 333–353, and 364–384; these read VVTL…PVGL, VGIM…PFML, LICL…AWNF, VLVI…SITA, AQAL…GLPI, TFFA…KLLP, PALM…YTAY, FATV…LVFG, SLVS…LPAA, LAIL…GMQV, VAMA…ALVG, and AIGY…VLIF.

Belongs to the major facilitator superfamily. SotB (TC 2.A.1.2) family.

The protein resides in the cell inner membrane. Functionally, involved in the efflux of sugars. The physiological role may be the reduction of the intracellular concentration of toxic sugars or sugar metabolites. The protein is Probable sugar efflux transporter of Salmonella paratyphi C (strain RKS4594).